Here is a 344-residue protein sequence, read N- to C-terminus: Small ribosomal subunit protein mS38 (344 aa).

Disordered stretches follow at residues 1–27 (MIPQSVRRVVAAAPQSPVVSSLAASSA), 43–101 (ALQK…SVPS), and 325–344 (KKYKKLMRRTRNERRKQDRL). Over residues 51–74 (SSKPSSPDDGSSRAFAARASVPAA) the composition is skewed to low complexity. Residues 325–338 (KKYKKLMRRTRNER) are compositionally biased toward basic residues.

It belongs to the mitochondrion-specific ribosomal protein mS38 family. Component of the mitochondrial small ribosomal subunit (mt-SSU). Mature N.crassa 74S mitochondrial ribosomes consist of a small (37S) and a large (54S) subunit. The 37S small subunit contains a 16S ribosomal RNA (16S mt-rRNA) and 32 different proteins. The 54S large subunit contains a 23S rRNA (23S mt-rRNA) and 42 different proteins.

The protein resides in the mitochondrion. Its function is as follows. Component of the mitochondrial ribosome (mitoribosome), a dedicated translation machinery responsible for the synthesis of mitochondrial genome-encoded proteins, including at least some of the essential transmembrane subunits of the mitochondrial respiratory chain. The mitoribosomes are attached to the mitochondrial inner membrane and translation products are cotranslationally integrated into the membrane. The protein is Small ribosomal subunit protein mS38 (cox24) of Neurospora crassa (strain ATCC 24698 / 74-OR23-1A / CBS 708.71 / DSM 1257 / FGSC 987).